Reading from the N-terminus, the 162-residue chain is Nucleotide-binding protein Franean1_6074 (162 aa).

It belongs to the YajQ family.

In terms of biological role, nucleotide-binding protein. In Parafrankia sp. (strain EAN1pec), this protein is Nucleotide-binding protein Franean1_6074.